The chain runs to 481 residues: Extracellular exo-alpha-(1-&gt;5)-L-arabinofuranosidase (481 aa).

Positions 1–27 (MRRLTVRLFTAVLAALALLTMGTPAHA) are cleaved as a signal peptide. The interval 37 to 336 (FTNPLAEKRA…KVYWNADGTP (300 aa)) is catalytic. The active-site Proton acceptor is Asp-47. Position 186 (Asn-186) interacts with substrate. Residue Glu-223 is the Proton donor of the active site. Residues His-287, Arg-321, 363 to 366 (HWDF), Asp-379, 457 to 460 (HYEN), and Asp-475 contribute to the substrate site. Residues 349-479 (VRFSSYNYPD…ALDRQDATFY (131 aa)) are ABD.

The protein belongs to the glycosyl hydrolase 43 family.

Its subcellular location is the secreted. It carries out the reaction Hydrolysis of terminal non-reducing alpha-L-arabinofuranoside residues in alpha-L-arabinosides.. It functions in the pathway glycan metabolism; L-arabinan degradation. Functionally, involved in the degradation of arabinan and is a key enzyme in the complete degradation of the plant cell wall. Catalyzes only the cleavage of terminal alpha-(1-&gt;5) arabinofuranosyl bonds of arabinan present in the arabinofuranosyl polysaccharides or oligosaccharides. It cannot act on other arabinose-containing polysaccharides and arabinoxylo-oligosaccharides. The polypeptide is Extracellular exo-alpha-(1-&gt;5)-L-arabinofuranosidase (Streptomyces avermitilis (strain ATCC 31267 / DSM 46492 / JCM 5070 / NBRC 14893 / NCIMB 12804 / NRRL 8165 / MA-4680)).